The sequence spans 195 residues: Imidazoleglycerol-phosphate dehydratase (195 aa).

It belongs to the imidazoleglycerol-phosphate dehydratase family.

It localises to the cytoplasm. The enzyme catalyses D-erythro-1-(imidazol-4-yl)glycerol 3-phosphate = 3-(imidazol-4-yl)-2-oxopropyl phosphate + H2O. It participates in amino-acid biosynthesis; L-histidine biosynthesis; L-histidine from 5-phospho-alpha-D-ribose 1-diphosphate: step 6/9. This Cupriavidus taiwanensis (strain DSM 17343 / BCRC 17206 / CCUG 44338 / CIP 107171 / LMG 19424 / R1) (Ralstonia taiwanensis (strain LMG 19424)) protein is Imidazoleglycerol-phosphate dehydratase.